The primary structure comprises 823 residues: Transcription factor SPT20 homolog-like 1 (823 aa).

5 disordered regions span residues 246-273, 369-524, 560-601, 631-669, and 720-757; these read SVKP…KEER, PRKK…AAQP, GSSF…AVQA, VLTG…LGLS, and LRQQ…PQHI. Residues 423–440 show a composition bias toward polar residues; it reads SHSSSGPASVSQLSSWKT. Low complexity-rich tracts occupy residues 469–509, 568–582, and 636–650; these read SSSG…QKPS, APGS…ISGS, and QQQS…QLQQ.

This sequence belongs to the SPT20 family.

This chain is Transcription factor SPT20 homolog-like 1 (SUPT20HL1), found in Homo sapiens (Human).